The sequence spans 287 residues: ADP-dependent (S)-NAD(P)H-hydrate dehydratase (287 aa).

Positions 7-283 (TTALVKKFIP…PEISTVMKPF (277 aa)) constitute a YjeF C-terminal domain. (6S)-NADPHX-binding residues include A42 and H159. AMP-binding positions include 196–200 (KGSTD) and G224. D225 serves as a coordination point for (6S)-NADPHX.

This sequence belongs to the NnrD/CARKD family. As to quaternary structure, homotetramer. It depends on Mg(2+) as a cofactor.

It catalyses the reaction (6S)-NADHX + ADP = AMP + phosphate + NADH + H(+). It carries out the reaction (6S)-NADPHX + ADP = AMP + phosphate + NADPH + H(+). Its function is as follows. Catalyzes the dehydration of the S-form of NAD(P)HX at the expense of ADP, which is converted to AMP. Together with NAD(P)HX epimerase, which catalyzes the epimerization of the S- and R-forms, the enzyme allows the repair of both epimers of NAD(P)HX, a damaged form of NAD(P)H that is a result of enzymatic or heat-dependent hydration. This Nitrosopumilus maritimus (strain SCM1) protein is ADP-dependent (S)-NAD(P)H-hydrate dehydratase.